Reading from the N-terminus, the 862-residue chain is Short transient receptor potential channel 7 (862 aa).

Residues 1–21 (MLRNSTFKNMQRRHTTLREKG) form a disordered region. The Cytoplasmic portion of the chain corresponds to 1 to 351 (MLRNSTFKNM…GLRQQSIAVK (351 aa)). Basic residues predominate over residues 10–21 (MQRRHTTLREKG). Residue Thr15 is modified to Phosphothreonine; by PKG/PRKG1. 4 ANK repeats span residues 42-71 (PEEERFLDSAEYGNIPVVRKMLEESKTLNF), 77-106 (MGQNALQLAVGNEHLEVTELLLKKENLARV), 108-134 (DALLLAISKGYVRIVEAILNHPAFAQG), and 163-192 (HDITPIILAAHCQEYEIVHILLLKGARIER). A helical membrane pass occupies residues 352–372 (FLAVFGVSIGLPFLAIAYWIA). At 373–383 (PCSKLGRTLRS) the chain is on the extracellular side. The chain crosses the membrane as a helical span at residues 384 to 404 (PFMKFVAHAVSFTIFLGLLVV). Residues 405–465 (NASDRFEGVK…KEIWEEGPRE (61 aa)) lie on the Cytoplasmic side of the membrane. The helical transmembrane segment at 466–486 (YVLHLWNLLDFGMLSIFVASF) threads the bilayer. Topologically, residues 487–537 (TARFMAFLKATEAQLYVDQHVQDDTLHNVSLPPEVAYFTYARDKWWPSDPQ) are extracellular. Residue Asn514 is glycosylated (N-linked (GlcNAc...) asparagine). A helical transmembrane segment spans residues 538 to 558 (IISEGLYAIAVVLSFSRIAYI). Topologically, residues 559-581 (LPANESFGPLQISLGRTVKDIFK) are cytoplasmic. A helical transmembrane segment spans residues 582–602 (FMVIFIMVFVAFMIGMFNLYS). Over 603–651 (YYRGAKYNPAFTTVEESFKTLFWSIFGLSEVISVVLKYDHKFIENIGYV) the chain is Extracellular. A helical membrane pass occupies residues 652-672 (LYGVYNVTMVVVLLNMLIAMI). The Cytoplasmic segment spans residues 673–862 (NNSYQEIEED…HLRVNKGKDI (190 aa)).

Belongs to the transient receptor (TC 1.A.4) family. STrpC subfamily. TRPC7 sub-subfamily. As to quaternary structure, interacts with MX1 and RNF24. Interacts (via ANK-repeat domains) with PRKG1. Post-translationally, phosphorylation by PRKG1 at Thr-15 negatively regulates TRPC7 activity.

It is found in the cell membrane. The protein localises to the nucleus envelope. It carries out the reaction Ca(2+)(in) = Ca(2+)(out). Functionally, forms a receptor-activated non-selective calcium permeant cation channel. Probably is operated by a phosphatidylinositol second messenger system activated by receptor tyrosine kinases or G-protein coupled receptors. Activated by diacylglycerol (DAG). May also be activated by intracellular calcium store depletion. In Homo sapiens (Human), this protein is Short transient receptor potential channel 7 (TRPC7).